A 117-amino-acid polypeptide reads, in one-letter code: Large ribosomal subunit protein uL22 (117 aa).

Belongs to the universal ribosomal protein uL22 family. In terms of assembly, part of the 50S ribosomal subunit.

Functionally, this protein binds specifically to 23S rRNA; its binding is stimulated by other ribosomal proteins, e.g. L4, L17, and L20. It is important during the early stages of 50S assembly. It makes multiple contacts with different domains of the 23S rRNA in the assembled 50S subunit and ribosome. Its function is as follows. The globular domain of the protein is located near the polypeptide exit tunnel on the outside of the subunit, while an extended beta-hairpin is found that lines the wall of the exit tunnel in the center of the 70S ribosome. This Leptospira biflexa serovar Patoc (strain Patoc 1 / ATCC 23582 / Paris) protein is Large ribosomal subunit protein uL22.